Reading from the N-terminus, the 154-residue chain is Ribonuclease H (154 aa).

Residues 5 to 146 (EQNIVYLYCD…ADELANRGID (142 aa)) form the RNase H type-1 domain. D14, E52, D74, and D138 together coordinate Mg(2+).

Belongs to the RNase H family. In terms of assembly, monomer. Mg(2+) serves as cofactor.

The protein resides in the cytoplasm. It catalyses the reaction Endonucleolytic cleavage to 5'-phosphomonoester.. In terms of biological role, endonuclease that specifically degrades the RNA of RNA-DNA hybrids. This Coxiella burnetii (strain CbuK_Q154) (Coxiella burnetii (strain Q154)) protein is Ribonuclease H.